Reading from the N-terminus, the 165-residue chain is Endoribonuclease YbeY (165 aa).

3 residues coordinate Zn(2+): His126, His130, and His136.

It belongs to the endoribonuclease YbeY family. Requires Zn(2+) as cofactor.

The protein localises to the cytoplasm. Its function is as follows. Single strand-specific metallo-endoribonuclease involved in late-stage 70S ribosome quality control and in maturation of the 3' terminus of the 16S rRNA. In Ruegeria pomeroyi (strain ATCC 700808 / DSM 15171 / DSS-3) (Silicibacter pomeroyi), this protein is Endoribonuclease YbeY.